Consider the following 2003-residue polypeptide: Histone acetyltransferase KAT6A (2003 aa).

The SAMD1-like winged helix (WH) domain maps to 1–77; sequence MVKLANPLYT…LNSYKDPDNP (77 aa). A required for activation of RUNX1-1 region spans residues 1 to 144; the sequence is MVKLANPLYT…CGGSAAPGFH (144 aa). The required for nuclear localization stretch occupies residues 52–166; the sequence is ELSVKDGTIL…HGRLLKDGPL (115 aa). The H15 domain occupies 95 to 171; it reads QSVDWNKLLK…KDGPLYRLNT (77 aa). Positions 144–663 are interaction with PML; the sequence is HQQLRLAIKR…RKGYGRFLID (520 aa). Lys-172 carries the N6-acetyllysine modification. 2 PHD-type zinc fingers span residues 206 to 265 and 262 to 313; these read IPIC…CKTC and CKTC…CRPR. The tract at residues 312–663 is interaction with RUNX1-1; it reads PRKKGRKLLQ…RKGYGRFLID (352 aa). The segment at 336–377 is disordered; the sequence is GRPKNRLKKQNTVSKGPFSKVRTGPGRGRKRKITVSSQSASS. 2 positions are modified to N6-acetyllysine: Lys-350 and Lys-355. Thr-369 is subject to Phosphothreonine; by PKB/AKT1. Ser-419 bears the Phosphoserine mark. The disordered stretch occupies residues 439–466; the sequence is RKKGNRKSSTSDWPTDNQDGWESKQENE. The segment covering 445 to 458 has biased composition (polar residues); sequence KSSTSDWPTDNQDG. Phosphoserine is present on Ser-472. Positions 487 to 777 are catalytic; sequence IQEQALQKVG…VDPECLRWTP (291 aa). Residues 503–777 form the MYST-type HAT domain; sequence PQVRCPSVIE…VDPECLRWTP (275 aa). The mediates interaction with BRPF1, required for histone H3 acetyltransferase activity stretch occupies residues 506-809; that stretch reads RCPSVIEFGK…EPQGQERELE (304 aa). The segment at 536–561 adopts a C2HC MYST-type zinc-finger fold; that stretch reads LYLCEFCLKYMKSRTILQQHMKKCGW. Lys-603 carries the N6-acetyllysine; by autocatalysis modification. Residues 644-648 and 653-659 contribute to the acetyl-CoA site; these read SCIMI and QRKGYGR. Glu-679 functions as the Proton donor/acceptor in the catalytic mechanism. Residue Ser-683 coordinates acetyl-CoA. The segment at 784 to 939 is disordered; the sequence is VVSEDEDEEA…DGKPDIPKGR (156 aa). Ser-786 is modified (phosphoserine). Over residues 786 to 798 the composition is skewed to acidic residues; the sequence is SEDEDEEADEGEK. A compositionally biased stretch (basic and acidic residues) spans 799–841; the sequence is EEPQGQERELETRVKVGKSVSREKKDQESSSLIETDKKPEVKE. An N6-acetyllysine mark is found at Lys-813 and Lys-816. Lys-836 participates in a covalent cross-link: Glycyl lysine isopeptide (Lys-Gly) (interchain with G-Cter in SUMO2). Residues 866-875 are compositionally biased toward basic residues; it reads RRGRCGRKNR. Positions 876 to 890 are enriched in basic and acidic residues; the sequence is KTQERFGDKDSKMLV. A Phosphotyrosine modification is found at Tyr-901. The segment covering 904–917 has biased composition (basic and acidic residues); it reads CEEKSETSQERFTE. 2 positions are modified to phosphoserine: Ser-941 and Ser-954. A disordered region spans residues 983–1083; it reads GFSESSEEEE…EEEESELFPR (101 aa). The residue at position 1007 (Lys-1007) is an N6-acetyllysine. Positions 1009-1030 are enriched in basic residues; that stretch reads TLKRKKPILHRRRRVRKRKHHN. The span at 1031-1042 shows a compositional bias: low complexity; the sequence is SSVVTETISETT. Composition is skewed to acidic residues over residues 1043 to 1053 and 1065 to 1079; these read EVLDEPFEDSD and FEME…EESE. Ser-1090, Ser-1091, and Ser-1115 each carry phosphoserine. Disordered regions lie at residues 1096-1174, 1197-1438, 1455-1533, 1546-1568, and 1631-1707; these read RCQS…RKPG, IKPG…GAYQ, HTDE…PSVS, DLGS…STMG, and TCVV…CSMN. Residues 1107–1120 are compositionally biased toward acidic residues; that stretch reads EEEEEEEESDDADD. Residues 1136–1147 are compositionally biased toward polar residues; the sequence is NSASLEPDTSTP. Residues 1148-1174 show a composition bias toward basic residues; the sequence is MKKKKGWPKGKSRKPIHWKKRPGRKPG. Basic and acidic residues predominate over residues 1204–1229; it reads RTQENEEIVEVKEDLLEERKEEMHTE. Composition is skewed to acidic residues over residues 1230–1241 and 1282–1299; these read PDEEAEEEEDTT and EEPQ…DEVT. Basic and acidic residues predominate over residues 1317 to 1334; the sequence is HLDSLKTKEPEEQPARED. A Glycyl lysine isopeptide (Lys-Gly) (interchain with G-Cter in SUMO2) cross-link involves residue Lys-1336. 2 stretches are compositionally biased toward basic and acidic residues: residues 1352 to 1361 and 1393 to 1414; these read DSRENTKDKD and DSNT…HSEL. A compositionally biased stretch (low complexity) spans 1473-1490; it reads HNSPISSIPSHPSQSVRS. 2 stretches are compositionally biased toward polar residues: residues 1502-1523 and 1550-1568; these read GYTQ…NMET and IEST…STMG. The interaction with RUNX1-2 stretch occupies residues 1511-1636; the sequence is GSLSAPSMQN…KSPQTCVVER (126 aa). Residues 1511–1740 form an interaction with PML region; that stretch reads GSLSAPSMQN…YERIPGDFGA (230 aa). Composition is skewed to pro residues over residues 1640–1673 and 1682–1698; these read NQQP…PPQP and QPPP…PQQQ. The segment at 1912–1947 is required for activation of RUNX1-2; that stretch reads SMNMNTLNAMNSYRMTQPMMNSSYHSNPAYMNQTAQ.

The protein belongs to the MYST (SAS/MOZ) family. As to quaternary structure, component of the MOZ/MORF complex composed at least of ING5, KAT6A, KAT6B, MEAF6 and one of BRPF1, BRD1/BRPF2 and BRPF3. Interacts with RUNX2. Interacts with RUNX1; phosphorylation of RUNX1 enhances the interaction. Interacts with p53/TP53. Interacts with PML and this interaction positively regulates its acetylation activity towards p53/TP53. Post-translationally, autoacetylated. Autoacetylation at Lys-603 is required for proper function. Phosphorylation at Thr-369 by PKB/AKT1 inhibits its interaction with PML and negatively regulates its acetylation activity towards p53/TP53.

It is found in the nucleus. It localises to the nucleolus. The protein resides in the nucleoplasm. The protein localises to the PML body. The catalysed reaction is L-lysyl-[protein] + acetyl-CoA = N(6)-acetyl-L-lysyl-[protein] + CoA + H(+). Its function is as follows. Histone acetyltransferase that acetylates lysine residues in histone H3 and histone H4 (in vitro). Component of the MOZ/MORF complex which has a histone H3 acetyltransferase activity. May act as a transcriptional coactivator for RUNX1 and RUNX2. Acetylates p53/TP53 at 'Lys-120' and 'Lys-382' and controls its transcriptional activity via association with PML. The protein is Histone acetyltransferase KAT6A (Kat6a) of Mus musculus (Mouse).